The chain runs to 102 residues: uncharacterized protein (102 aa).

A signal peptide spans 1 to 22 (MKFKYGATLFSGFLGLSAILAA). Cysteine 23 is lipidated: N-palmitoyl cysteine. Cysteine 23 carries S-diacylglycerol cysteine lipidation.

The protein belongs to the MG185/MG260 family.

The protein resides in the cell membrane. This is an uncharacterized protein from Mycoplasma pneumoniae (strain ATCC 29342 / M129 / Subtype 1) (Mycoplasmoides pneumoniae).